We begin with the raw amino-acid sequence, 110 residues long: Thiosulfate sulfurtransferase GlpE (110 aa).

The region spanning 17–105 is the Rhodanese domain; that stretch reads RENGAQVVDI…WRSVYPADTS (89 aa). The active-site Cysteine persulfide intermediate is C65.

The protein belongs to the GlpE family.

The protein localises to the cytoplasm. The catalysed reaction is thiosulfate + hydrogen cyanide = thiocyanate + sulfite + 2 H(+). The enzyme catalyses thiosulfate + [thioredoxin]-dithiol = [thioredoxin]-disulfide + hydrogen sulfide + sulfite + 2 H(+). Its function is as follows. Transferase that catalyzes the transfer of sulfur from thiosulfate to thiophilic acceptors such as cyanide or dithiols. May function in a CysM-independent thiosulfate assimilation pathway by catalyzing the conversion of thiosulfate to sulfite, which can then be used for L-cysteine biosynthesis. This chain is Thiosulfate sulfurtransferase GlpE, found in Pseudomonas paraeruginosa (strain DSM 24068 / PA7) (Pseudomonas aeruginosa (strain PA7)).